The sequence spans 2346 residues: Acetyl-CoA carboxylase 1 (2346 aa).

Met-1 carries the N-acetylmethionine modification. Ser-5, Ser-23, Ser-25, Ser-29, Ser-34, Ser-48, Ser-50, and Ser-53 each carry phosphoserine. The residue at position 58 (Thr-58) is a Phosphothreonine. Ser-78 is subject to Phosphoserine. Residue Ser-80 is modified to Phosphoserine; by AMPK. Residues 117 to 618 (VIEKVLIANN…GTGWLDRLIA (502 aa)) enclose the Biotin carboxylation domain. The region spanning 275–466 (SKRILNVPQE…LPAAQLQIAM (192 aa)) is the ATP-grasp domain. Position 315–320 (315–320 (GGGGKG)) interacts with ATP. Glu-424, Glu-437, and Asn-439 together coordinate Mg(2+). Mn(2+) is bound by residues Glu-424, Glu-437, and Asn-439. Residue Arg-441 is part of the active site. Thr-610 carries the post-translational modification Phosphothreonine. In terms of domain architecture, Biotinyl-binding spans 745–819 (FEKENDPSVL…DPGCVIAKMQ (75 aa)). Lys-786 is subject to N6-biotinyllysine. Phosphoserine occurs at positions 835, 1201, 1216, and 1218. Thr-1227 is modified (phosphothreonine). A phosphoserine mark is found at Ser-1259, Ser-1263, and Ser-1273. N6-acetyllysine is present on Lys-1334. A CoA carboxyltransferase N-terminal domain is found at 1576–1914 (PYVTKDQLQS…SVYSSVPLLN (339 aa)). The interval 1576–2234 (PYVTKDQLQS…EDLVKKKIHN (659 aa)) is carboxyltransferase. Positions 1823, 2127, and 2129 each coordinate CoA. A CoA carboxyltransferase C-terminal domain is found at 1918-2234 (PIDRVIEFVP…EDLVKKKIHN (317 aa)). A Phosphothreonine modification is found at Thr-2153.

Monomer, homodimer, and homotetramer. Can form filamentous polymers. Interacts in its inactive phosphorylated form with the BRCT domains of BRCA1 which prevents ACACA dephosphorylation and inhibits lipid synthesis. Interacts with MID1IP1; interaction with MID1IP1 promotes oligomerization and increases its activity. It depends on Mg(2+) as a cofactor. Mn(2+) is required as a cofactor. Biotin serves as cofactor. In terms of processing, phosphorylation on Ser-1263 is required for interaction with BRCA1. Post-translationally, phosphorylation at Ser-80 by AMPK inactivates enzyme activity. The biotin cofactor is covalently attached to the central biotinyl-binding domain and is required for the catalytic activity.

It localises to the cytoplasm. The protein localises to the cytosol. The enzyme catalyses hydrogencarbonate + acetyl-CoA + ATP = malonyl-CoA + ADP + phosphate + H(+). It functions in the pathway lipid metabolism; malonyl-CoA biosynthesis; malonyl-CoA from acetyl-CoA: step 1/1. With respect to regulation, inhibited by phosphorylation. Citrate promotes oligomerization of the protein into filaments that correspond to the most active form of the carboxylase. Cytosolic enzyme that catalyzes the carboxylation of acetyl-CoA to malonyl-CoA, the first and rate-limiting step of de novo fatty acid biosynthesis. This is a 2 steps reaction starting with the ATP-dependent carboxylation of the biotin carried by the biotin carboxyl carrier (BCC) domain followed by the transfer of the carboxyl group from carboxylated biotin to acetyl-CoA. This chain is Acetyl-CoA carboxylase 1, found in Bos taurus (Bovine).